Reading from the N-terminus, the 593-residue chain is Uncoordinated protein 58 (593 aa).

Transmembrane regions (helical) follow at residues 186–206 (VILV…LMLL), 291–311 (TFPT…YGEV), 320–340 (VFSV…AADI), 402–422 (PIGA…AMFI), 430–450 (FIHA…GDIV), and 455–475 (IFLS…TMCV).

This sequence belongs to the two pore domain potassium channel (TC 1.A.1.8) family.

It is found in the membrane. Functionally, has a role in mobility, possibly in the transport of potassium in muscles. In Caenorhabditis briggsae, this protein is Uncoordinated protein 58.